The sequence spans 464 residues: L-aspartate oxidase (464 aa).

FAD-binding positions include Ser8–Ala11 and Asn37–Gly44. Arg248 serves as the catalytic Proton donor/acceptor. Residues Glu329 and Ser345–Leu346 each bind FAD.

This sequence belongs to the FAD-dependent oxidoreductase 2 family. NadB subfamily. Requires FAD as cofactor.

The protein resides in the cytoplasm. It catalyses the reaction L-aspartate + O2 = iminosuccinate + H2O2. It participates in cofactor biosynthesis; NAD(+) biosynthesis; iminoaspartate from L-aspartate (oxidase route): step 1/1. Functionally, catalyzes the oxidation of L-aspartate to iminoaspartate, the first step in the de novo biosynthesis of NAD(+). This chain is L-aspartate oxidase (nadB), found in Pyrococcus furiosus (strain ATCC 43587 / DSM 3638 / JCM 8422 / Vc1).